We begin with the raw amino-acid sequence, 222 residues long: 3-demethoxyubiquinol 3-hydroxylase (222 aa).

Fe cation is bound by residues Glu-71, Glu-101, His-104, Glu-153, Glu-185, and His-188.

Belongs to the COQ7 family. Fe cation is required as a cofactor.

The protein localises to the cell membrane. The enzyme catalyses a 5-methoxy-2-methyl-3-(all-trans-polyprenyl)benzene-1,4-diol + AH2 + O2 = a 3-demethylubiquinol + A + H2O. It functions in the pathway cofactor biosynthesis; ubiquinone biosynthesis. Its function is as follows. Catalyzes the hydroxylation of 2-nonaprenyl-3-methyl-6-methoxy-1,4-benzoquinol during ubiquinone biosynthesis. The chain is 3-demethoxyubiquinol 3-hydroxylase from Bordetella bronchiseptica (strain ATCC BAA-588 / NCTC 13252 / RB50) (Alcaligenes bronchisepticus).